We begin with the raw amino-acid sequence, 202 residues long: MSLIPIVVEQSSRGERAFDIYSRLLRDRIIFLGTAITDEVANVIIAQLLFLESEDPDKDIHFYINSPGGLVTAGLAIYDTMQFIKPNVSTLCMGQAASMAAILLAAGVKGKRYALPHVRIMLHQPMGGFQGQATDVEIQAKEILKLREELNDILVRHTGRPVEQIQRDTDRDFYMSGEQAREYGMVDHIFTSRLSILPSATS.

Residue Ser-98 is the Nucleophile of the active site. The active site involves His-123.

The protein belongs to the peptidase S14 family. Fourteen ClpP subunits assemble into 2 heptameric rings which stack back to back to give a disk-like structure with a central cavity, resembling the structure of eukaryotic proteasomes.

It is found in the cytoplasm. It catalyses the reaction Hydrolysis of proteins to small peptides in the presence of ATP and magnesium. alpha-casein is the usual test substrate. In the absence of ATP, only oligopeptides shorter than five residues are hydrolyzed (such as succinyl-Leu-Tyr-|-NHMec, and Leu-Tyr-Leu-|-Tyr-Trp, in which cleavage of the -Tyr-|-Leu- and -Tyr-|-Trp bonds also occurs).. Its function is as follows. Cleaves peptides in various proteins in a process that requires ATP hydrolysis. Has a chymotrypsin-like activity. Plays a major role in the degradation of misfolded proteins. This chain is ATP-dependent Clp protease proteolytic subunit, found in Syntrophobacter fumaroxidans (strain DSM 10017 / MPOB).